We begin with the raw amino-acid sequence, 129 residues long: Fluoride-specific ion channel FluC (129 aa).

4 helical membrane passes run 6-26 (ILAI…FNGI), 35-55 (IPFG…ILIA), 73-93 (TGVL…FLLL), and 98-118 (IALA…MAGG). Na(+)-binding residues include Gly77 and Thr80.

This sequence belongs to the fluoride channel Fluc/FEX (TC 1.A.43) family.

The protein localises to the cell inner membrane. The enzyme catalyses fluoride(in) = fluoride(out). Na(+) is not transported, but it plays an essential structural role and its presence is essential for fluoride channel function. Fluoride-specific ion channel. Important for reducing fluoride concentration in the cell, thus reducing its toxicity. This is Fluoride-specific ion channel FluC from Sulfurimonas denitrificans (strain ATCC 33889 / DSM 1251) (Thiomicrospira denitrificans (strain ATCC 33889 / DSM 1251)).